A 270-amino-acid chain; its full sequence is Cytochrome c oxidase subunit 3 (270 aa).

7 consecutive transmembrane segments (helical) span residues 22 to 42 (PWPIVVSFSLLSLALSLGLTM), 46 to 66 (IGEMYLVNLALLVVLGSGVLW), 88 to 108 (INIGFLLFVLSEVLIFSALFW), 128 to 148 (VGITAVQPTELPLLNTIILLA), 168 to 188 (SLSGLLITTWLIIIFVICQYI), 205 to 225 (VFFAGTGLHFLHMVMLAIMLA), and 248 to 268 (IIYLHVLDVIWLFLYIVFYWW).

This sequence belongs to the cytochrome c oxidase subunit 3 family. As to quaternary structure, component of the cytochrome c oxidase (complex IV, CIV), a multisubunit enzyme composed of a catalytic core of 3 subunits and several supernumerary subunits. The complex exists as a monomer or a dimer and forms supercomplexes (SCs) in the inner mitochondrial membrane with ubiquinol-cytochrome c oxidoreductase (cytochrome b-c1 complex, complex III, CIII).

It is found in the mitochondrion inner membrane. The catalysed reaction is 4 Fe(II)-[cytochrome c] + O2 + 8 H(+)(in) = 4 Fe(III)-[cytochrome c] + 2 H2O + 4 H(+)(out). In terms of biological role, component of the cytochrome c oxidase, the last enzyme in the mitochondrial electron transport chain which drives oxidative phosphorylation. The respiratory chain contains 3 multisubunit complexes succinate dehydrogenase (complex II, CII), ubiquinol-cytochrome c oxidoreductase (cytochrome b-c1 complex, complex III, CIII) and cytochrome c oxidase (complex IV, CIV), that cooperate to transfer electrons derived from NADH and succinate to molecular oxygen, creating an electrochemical gradient over the inner membrane that drives transmembrane transport and the ATP synthase. Cytochrome c oxidase is the component of the respiratory chain that catalyzes the reduction of oxygen to water. Electrons originating from reduced cytochrome c in the intermembrane space (IMS) are transferred via the dinuclear copper A center (CU(A)) of subunit 2 and heme A of subunit 1 to the active site in subunit 1, a binuclear center (BNC) formed by heme A3 and copper B (CU(B)). The BNC reduces molecular oxygen to 2 water molecules using 4 electrons from cytochrome c in the IMS and 4 protons from the mitochondrial matrix. This Vanderwaltozyma polyspora (strain ATCC 22028 / DSM 70294 / BCRC 21397 / CBS 2163 / NBRC 10782 / NRRL Y-8283 / UCD 57-17) (Kluyveromyces polysporus) protein is Cytochrome c oxidase subunit 3 (COX3).